The primary structure comprises 114 residues: Ribonuclease P protein component (114 aa).

It belongs to the RnpA family. As to quaternary structure, consists of a catalytic RNA component (M1 or rnpB) and a protein subunit.

The catalysed reaction is Endonucleolytic cleavage of RNA, removing 5'-extranucleotides from tRNA precursor.. In terms of biological role, RNaseP catalyzes the removal of the 5'-leader sequence from pre-tRNA to produce the mature 5'-terminus. It can also cleave other RNA substrates such as 4.5S RNA. The protein component plays an auxiliary but essential role in vivo by binding to the 5'-leader sequence and broadening the substrate specificity of the ribozyme. The polypeptide is Ribonuclease P protein component (Legionella pneumophila (strain Paris)).